A 375-amino-acid chain; its full sequence is Alcohol dehydrogenase 6 (375 aa).

The Zn(2+) site is built by Cys47, His69, Cys99, Cys102, Cys105, Cys113, and Cys175. Residues 200–205 (GLGGVG), Asp224, Lys229, 293–295 (VGS), and Arg370 each bind NAD(+).

Belongs to the zinc-containing alcohol dehydrogenase family. Class-V subfamily. In terms of assembly, dimer. Requires Zn(2+) as cofactor. Liver.

The protein resides in the cytoplasm. It carries out the reaction a primary alcohol + NAD(+) = an aldehyde + NADH + H(+). It catalyses the reaction a secondary alcohol + NAD(+) = a ketone + NADH + H(+). Its function is as follows. Alcohol dehydrogenase. Catalyzes the NAD-dependent oxidation of primary alcohols to the corresponding aldehydes. Oxidizes secondary alcohols to the corresponding ketones. The polypeptide is Alcohol dehydrogenase 6 (ADH6) (Peromyscus maniculatus (North American deer mouse)).